A 371-amino-acid polypeptide reads, in one-letter code: Cell division control protein 3 (371 aa).

Residues A22–L307 enclose the Septin-type G domain. Positions G32–S39 are G1 motif. Residues G32–S39, G116, K195–E203, and R257 contribute to the GTP site. The interval E113–G116 is G3 motif. Residues G194–D197 are G4 motif.

Belongs to the TRAFAC class TrmE-Era-EngA-EngB-Septin-like GTPase superfamily. Septin GTPase family. Component of the septin complex.

In terms of biological role, septins are GTPases involved in cytokinesis. The septins localize to the site of cleavage and act as a structural scaffold that recruits different components involved in diverse processes at specific stages during the cell cycle. Septins are also involved in cell morphogenesis, chitin deposition, cell cycle regulation, cell compartmentalization and spore wall formation. In Encephalitozoon cuniculi (strain GB-M1) (Microsporidian parasite), this protein is Cell division control protein 3 (CDC3).